Here is a 166-residue protein sequence, read N- to C-terminus: Regulatory protein RecX (166 aa).

It belongs to the RecX family.

It localises to the cytoplasm. Functionally, modulates RecA activity. In Klebsiella pneumoniae subsp. pneumoniae (strain ATCC 700721 / MGH 78578), this protein is Regulatory protein RecX.